Consider the following 416-residue polypeptide: MSSNCTSTTAVAVAPLSASKTKTKKKHFVCQKVKLFRASEPILSVLMWGVNHTINELSNVPVPVMLMPDDFKAYSKIKVDNHLFNKENLPSRFKFKEYCPMVFRNLRERFGIDDQDYQNSVTRSAPINSDSQGRCGTRFLTTYDRRFVIKTVSSEDVAEMHNILKKYHQFIVECHGNTLLPQFLGMYRLTVDGVETYMVVTRNVFSHRLTVHRKYDLKGSTVAREASDKEKAKDLPTFKDNDFLNEGQKLRVGEESKKNFLEKLKRDVEFLAQLKIMDYSLLVGIHDVDRAEQEETEVEDRAEEEECENDGVGGGLLCSYGTPPDSPGNLLSFPRFFGPGEFDPSVDVYAMKSHESAPKKEVYFMAIIDILTPYDAKKKAAHAAKTVKHGAGAEISTVNPEQYSKRFNEFMSNILT.

S2 carries the N-acetylserine modification. T8 carries the phosphothreonine modification. S19 carries the phosphoserine modification. The PIPK domain occupies 38-415 (ASEPILSVLM…RFNEFMSNIL (378 aa)). Residues 64-70 (VMLMPDD) form a required for interaction with PIP5K1A region. K94 and K150 each carry N6-acetyllysine. ATP contacts are provided by residues 202-204 (RNV) and K214. GTP contacts are provided by residues 203 to 204 (NV) and K214. T322 is subject to Phosphothreonine. At S326 the chain carries Phosphoserine. Position 369 (D369) interacts with GTP.

In terms of assembly, homodimer. Binds TNFRSF1A. Interacts with PIP4K2A; the interaction suppresses ubiquitination by the SPOP/CUL3 complex. Probably interacts with PIP5K1A; the interaction inhibits PIP5K1A kinase activity. Ubiquitinated by the SPOP/CUL3 complex. Ubiquitination is stimulated by PtdIns5P levels. In terms of processing, phosphorylated on serine residues.

It localises to the endoplasmic reticulum membrane. It is found in the cell membrane. The protein resides in the nucleus. The protein localises to the cytoplasm. It catalyses the reaction a 1,2-diacyl-sn-glycero-3-phospho-(1D-myo-inositol-5-phosphate) + ATP = a 1,2-diacyl-sn-glycero-3-phospho-(1D-myo-inositol-4,5-bisphosphate) + ADP + H(+). The enzyme catalyses 1,2-dihexadecanoyl-sn-glycero-3-phospho-(1D-myo-inositol-5-phosphate) + ATP = 1,2-dihexadecanoyl-sn-glycero-3-phospho-(1D-myo-inositol-4,5-bisphosphate) + ADP + H(+). It carries out the reaction 1,2-dihexadecanoyl-sn-glycero-3-phospho-(1D-myo-inositol-5-phosphate) + GTP = 1,2-dihexadecanoyl-sn-glycero-3-phospho-(1D-myo-inositol-4,5-bisphosphate) + GDP + H(+). Its function is as follows. Participates in the biosynthesis of phosphatidylinositol 4,5-bisphosphate. Preferentially utilizes GTP, rather than ATP, for PI(5)P phosphorylation and its activity reflects changes in direct proportion to the physiological GTP concentration. Its GTP-sensing activity is critical for metabolic adaptation. PIP4Ks negatively regulate insulin signaling through a catalytic-independent mechanism. They interact with PIP5Ks and suppress PIP5K-mediated PtdIns(4,5)P2 synthesis and insulin-dependent conversion to PtdIns(3,4,5)P3. The sequence is that of Phosphatidylinositol 5-phosphate 4-kinase type-2 beta from Rattus norvegicus (Rat).